Here is a 610-residue protein sequence, read N- to C-terminus: UvrABC system protein C (610 aa).

Residues 16 to 94 (SQPGVYRMYD…IKLYQPRYNV (79 aa)) form the GIY-YIG domain. One can recognise a UVR domain in the interval 204 to 239 (DQVLTQLIARMEKASQDLAFEEAARIRDQIQAVRRV).

This sequence belongs to the UvrC family. Interacts with UvrB in an incision complex.

It localises to the cytoplasm. Its function is as follows. The UvrABC repair system catalyzes the recognition and processing of DNA lesions. UvrC both incises the 5' and 3' sides of the lesion. The N-terminal half is responsible for the 3' incision and the C-terminal half is responsible for the 5' incision. The sequence is that of UvrABC system protein C from Salmonella paratyphi B (strain ATCC BAA-1250 / SPB7).